The sequence spans 256 residues: UPF0246 protein TERTU_4575 (256 aa).

The protein belongs to the UPF0246 family.

The chain is UPF0246 protein TERTU_4575 from Teredinibacter turnerae (strain ATCC 39867 / T7901).